The chain runs to 250 residues: Transcriptional activator protein EchR (250 aa).

The HTH luxR-type domain occupies 173–238; the sequence is KSQEPNIFSQ…HAIRLGVEMN (66 aa). A DNA-binding region (H-T-H motif) is located at residues 197 to 216; it reads YQEIALILGITTSTVKFHIG.

The protein belongs to the autoinducer-regulated transcriptional regulatory protein family.

Functionally, functions as a potential ohlL-responsive transcriptional regulator. The protein is Transcriptional activator protein EchR (echR) of Dickeya chrysanthemi (Pectobacterium chrysanthemi).